Here is a 101-residue protein sequence, read N- to C-terminus: Thyrotropin subunit beta (101 aa).

Intrachain disulfides connect Cys-2-Cys-88, Cys-10-Cys-66, Cys-14-Cys-68, and Cys-71-Cys-78. Asn-6 carries N-linked (GlcNAc...) asparagine glycosylation.

The protein belongs to the glycoprotein hormones subunit beta family. As to quaternary structure, heterodimer of a common alpha chain and a unique beta chain which confers biological specificity to thyrotropin, lutropin, follitropin and gonadotropin.

It is found in the secreted. Indispensable for the control of thyroid structure and metabolism. This is Thyrotropin subunit beta (TSHB) from Phodopus sungorus (Striped hairy-footed hamster).